The chain runs to 291 residues: uncharacterized protein (291 aa).

One can recognise a PNPLA domain in the interval 5-196; the sequence is GVFSGGGVKG…LSNFPIWLFS (192 aa). Residues 9–14 carry the GXGXXG motif; the sequence is GGGVKG. A helical membrane pass occupies residues 34–50; it reads VAGTSAGAIIAAFIASG. The short motif at 36–40 is the GXSXG element; that stretch reads GTSAG. The Nucleophile role is filled by Ser-38. The active-site Proton acceptor is Asp-183. A DGA/G motif is present at residues 183–185; sequence DGG.

It is found in the cell membrane. Functionally, probable lipid hydrolase. This is an uncharacterized protein from Bacillus subtilis (strain 168).